We begin with the raw amino-acid sequence, 3147 residues long: Bassianolide nonribosomal cyclodepsipeptide synthetase (3147 aa).

A compositionally biased stretch (polar residues) spans 1 to 12; sequence MEPPNNANTGQL. The disordered stretch occupies residues 1-23; that stretch reads MEPPNNANTGQLGPTLPNGTVDL. The condensation 1 stretch occupies residues 69–454; that stretch reads HVVYEIPEDV…INKLQSTDGS (386 aa). Positions 495-887 are adenylation 1; sequence DDTPNKPAVC…GRMDSQVKIR (393 aa). In terms of domain architecture, Carrier 1 spans 1015–1091; that stretch reads PDASAGVTKL…SLQAAIGGSS (77 aa). S1052 is modified (O-(pantetheine 4'-phosphoryl)serine). The interval 1109–1538 is condensation 2; sequence SYSQGRLWFL…QTLISVVPLT (430 aa). Positions 1567 to 1973 are adenylation 2; that stretch reads FATQVASYPD…GRMDFQFKIR (407 aa). Residues 2041-2181 form an S-adenosyl-L-methionine-dependent N-methyltransferase (MT) region; that stretch reads TYTELDTVSS…FPTRDYLEQV (141 aa). 2 Carrier domains span residues 2515–2589 and 2615–2689; these read FPLS…RQQL and APTT…EVSQ. An O-(pantetheine 4'-phosphoryl)serine mark is found at S2549 and S2649. A condensation 3 region spans residues 2735–3139; sequence QDVYLATHLQ…THLMEQVCNT (405 aa).

Belongs to the NRP synthetase family.

In terms of biological role, bassianolide nonribosomal synthetase that mediates the biosynthesis of bassianolide (BSL), a non-ribosomal cyclodepsipeptide that shows insecticidal and cancer cell antiproliferative activity. BSLS first catalyzes the iterative synthesis of an enzyme-bound dipeptidol monomer intermediate from D-2-hydroxyisovalerate and L-leucine before performing the condensation and cyclization of 4 dipeptidol monomers to yield the cyclic tetrameric ester bassianolide. The N-methyltransferase MT domain is responsible for the methylation of the leucine residues of bassianolide. BSLS is flexible with both the amino acid and hydroxyl acid precursors, and produces bassianolide as the major product (containing N-methyl-L-Leu), together with small amounts of beauvericin and its analogs beauvericins A-C (containing N-methyl-L-Phe). This chain is Bassianolide nonribosomal cyclodepsipeptide synthetase, found in Beauveria bassiana (strain ARSEF 2860) (White muscardine disease fungus).